A 210-amino-acid chain; its full sequence is Putative 3-methyladenine DNA glycosylase (210 aa).

The protein belongs to the DNA glycosylase MPG family.

This is Putative 3-methyladenine DNA glycosylase from Lactobacillus helveticus (strain DPC 4571).